Here is a 388-residue protein sequence, read N- to C-terminus: Succinate--CoA ligase [ADP-forming] subunit beta (388 aa).

One can recognise an ATP-grasp domain in the interval 9 to 244 (KQLFARSGLP…QSQEDPREAQ (236 aa)). ATP-binding positions include K46, 53 to 55 (GRG), E99, T102, and E107. Positions 199 and 213 each coordinate Mg(2+). Substrate contacts are provided by residues N264 and 321–323 (GIV).

This sequence belongs to the succinate/malate CoA ligase beta subunit family. Heterotetramer of two alpha and two beta subunits. Mg(2+) is required as a cofactor.

It carries out the reaction succinate + ATP + CoA = succinyl-CoA + ADP + phosphate. The catalysed reaction is GTP + succinate + CoA = succinyl-CoA + GDP + phosphate. Its pathway is carbohydrate metabolism; tricarboxylic acid cycle; succinate from succinyl-CoA (ligase route): step 1/1. Its function is as follows. Succinyl-CoA synthetase functions in the citric acid cycle (TCA), coupling the hydrolysis of succinyl-CoA to the synthesis of either ATP or GTP and thus represents the only step of substrate-level phosphorylation in the TCA. The beta subunit provides nucleotide specificity of the enzyme and binds the substrate succinate, while the binding sites for coenzyme A and phosphate are found in the alpha subunit. This Cronobacter sakazakii (strain ATCC BAA-894) (Enterobacter sakazakii) protein is Succinate--CoA ligase [ADP-forming] subunit beta.